Here is a 322-residue protein sequence, read N- to C-terminus: MQTRNTFSWTWIREEITRSISVSLMIYIITWSSISNAYPIFAQQNYENPREATGRIVCANCHLANKPVDIEVPQAVLPDTVFEAVVKIPYDMQLKQVLANGKKGALNVGAVLILPEGFELAPPDRISPEMKEKIGNLSFQNYRPNKKNILVIGPVPGQKYSEITFPILAPDPATNKDVHFLKYPIYVGGNRGRGQIYPDGSKSNNTVYNATAGGIISKILRKEKGVYEITIADASNGRQVIDIIPRGLELLVSEGESIKLDQPLTSNPNVGGFGQGDAEIVLQDPLRVQGLLFFLGSVVLAQIFLVLKKKQFEKVQLSEMNF.

A signal peptide spans 1 to 35 (MQTRNTFSWTWIREEITRSISVSLMIYIITWSSIS). The heme site is built by Y38, C58, C61, and H62. Residues 288–308 (VQGLLFFLGSVVLAQIFLVLK) traverse the membrane as a helical segment.

This sequence belongs to the cytochrome f family. As to quaternary structure, the 4 large subunits of the cytochrome b6-f complex are cytochrome b6, subunit IV (17 kDa polypeptide, petD), cytochrome f and the Rieske protein, while the 4 small subunits are PetG, PetL, PetM and PetN. The complex functions as a dimer. The cofactor is heme.

The protein localises to the plastid. It is found in the chloroplast thylakoid membrane. Functionally, component of the cytochrome b6-f complex, which mediates electron transfer between photosystem II (PSII) and photosystem I (PSI), cyclic electron flow around PSI, and state transitions. This is Cytochrome f from Aethionema grandiflorum (Persian stone-cress).